Reading from the N-terminus, the 248-residue chain is UDP-2,3-diacylglucosamine hydrolase (248 aa).

Asp8, His10, Asp41, Asn79, and His114 together coordinate Mn(2+). 79 to 80 (NR) is a binding site for substrate. Substrate contacts are provided by Asp122, Ser160, Asp171, Gln174, and His202. Mn(2+)-binding residues include His202 and His204.

Belongs to the LpxH family. It depends on Mn(2+) as a cofactor.

The protein resides in the cell inner membrane. It carries out the reaction UDP-2-N,3-O-bis[(3R)-3-hydroxytetradecanoyl]-alpha-D-glucosamine + H2O = 2-N,3-O-bis[(3R)-3-hydroxytetradecanoyl]-alpha-D-glucosaminyl 1-phosphate + UMP + 2 H(+). The protein operates within glycolipid biosynthesis; lipid IV(A) biosynthesis; lipid IV(A) from (3R)-3-hydroxytetradecanoyl-[acyl-carrier-protein] and UDP-N-acetyl-alpha-D-glucosamine: step 4/6. Hydrolyzes the pyrophosphate bond of UDP-2,3-diacylglucosamine to yield 2,3-diacylglucosamine 1-phosphate (lipid X) and UMP by catalyzing the attack of water at the alpha-P atom. Involved in the biosynthesis of lipid A, a phosphorylated glycolipid that anchors the lipopolysaccharide to the outer membrane of the cell. The sequence is that of UDP-2,3-diacylglucosamine hydrolase from Stenotrophomonas maltophilia (strain K279a).